The following is a 533-amino-acid chain: Retinoic acid receptor RXR-beta (533 aa).

Residues methionine 1–valine 24 are disordered. A modulating region spans residues methionine 1–leucine 204. Position 25 is an omega-N-methylarginine (arginine 25). A disordered region spans residues arginine 37–valine 183. Positions alanine 46–proline 61 are enriched in low complexity. A compositionally biased stretch (basic and acidic residues) spans glutamate 67–serine 82. The segment covering proline 83–glycine 94 has biased composition (low complexity). Pro residues-rich tracts occupy residues alanine 95–serine 109 and alanine 118–leucine 129. Residues glycine 130–proline 143 show a composition bias toward low complexity. A compositionally biased stretch (pro residues) spans glycine 144–phenylalanine 153. NR C4-type zinc fingers lie at residues cysteine 205 to cysteine 225 and cysteine 241 to cysteine 265. Positions cysteine 205–methionine 270 form a DNA-binding region, nuclear receptor. Positions lysine 271–alanine 295 are hinge. A compositionally biased stretch (basic and acidic residues) spans glutamine 276 to aspartate 288. Disordered stretches follow at residues glutamine 276 to methionine 299 and glutamine 313 to valine 336. In terms of domain architecture, NR LBD spans proline 296–proline 529. A compositionally biased stretch (gly residues) spans glutamate 320 to glycine 329.

The protein belongs to the nuclear hormone receptor family. NR2 subfamily. As to quaternary structure, homodimer (in vitro). Heterodimer with other retinoic acid receptor family members. Binds DNA preferentially as a RAR/RXR heterodimer. Interacts with NR1H3. Interacts with AKAP13.

It is found in the nucleus. Its subcellular location is the cytoplasm. Functionally, receptor for retinoic acid. Retinoic acid receptors bind as heterodimers to their target response elements in response to their ligands, all-trans or 9-cis retinoic acid, and regulate gene expression in various biological processes. The RAR/RXR heterodimers bind to the retinoic acid response elements (RARE). The polypeptide is Retinoic acid receptor RXR-beta (RXRB) (Canis lupus familiaris (Dog)).